The sequence spans 307 residues: 3-ketodihydrosphingosine reductase TSC10 (307 aa).

Leu11 is an NADP(+) binding site. NADPH is bound by residues Gly14, Ser16, and Gly18. A GXSXG motif is present at residues 14-18; the sequence is GGSQG. Leu19 serves as a coordination point for NADP(+). Positions 40, 44, and 74 each coordinate NADPH. The Proton donor role is filled by Ser147. The NADP(+) site is built by Tyr161, Lys165, and Ser194. The active-site Proton acceptor is Tyr161. Lys165 acts as the Lowers pKa of active site Tyr in catalysis. A helical membrane pass occupies residues 261 to 281; the sequence is YFLWPLGWLLGALVNLLVVPI.

It belongs to the short-chain dehydrogenases/reductases (SDR) family.

The protein resides in the endoplasmic reticulum membrane. The enzyme catalyses sphinganine + NADP(+) = 3-oxosphinganine + NADPH + H(+). Its pathway is lipid metabolism; sphingolipid metabolism. Functionally, catalyzes the reduction of 3'-oxosphinganine (3-ketodihydrosphingosine/KDS) to sphinganine (dihydrosphingosine/DHS), the second step of de novo sphingolipid biosynthesis. The polypeptide is 3-ketodihydrosphingosine reductase TSC10 (TSC10) (Eremothecium gossypii (strain ATCC 10895 / CBS 109.51 / FGSC 9923 / NRRL Y-1056) (Yeast)).